The chain runs to 249 residues: Probable transcriptional regulatory protein CYA_2259 (249 aa).

The protein belongs to the TACO1 family.

Its subcellular location is the cytoplasm. This Synechococcus sp. (strain JA-3-3Ab) (Cyanobacteria bacterium Yellowstone A-Prime) protein is Probable transcriptional regulatory protein CYA_2259.